Reading from the N-terminus, the 359-residue chain is MITVQVDLQERSYPIYIGSGLLKQNSLLAKHIVGSEVMVVTNETVAPLYLDTLLKGLKDYRCAEIILPDGEQHKTLAVLQQIFDDLLKVPFSRHCTVIALGGGVIGDMAGFAAACYQRGVAYIQVPTTLLAQVDSSVGGKTAVNHPLGKNMIGAFYQPRCVLADTDTLDTLDERQLRAGLAEVIKYGLIRDIDFFTWLEEHASEVLAREPSALIHAIERSCRNKAEIVAADERESGVRAILNLGHTFGHAIETGLGYGAWLHGEAVAAGMAMAADLSQRLGWLSATEVGRVLNLLERAGLPRHSPEAIHKARFLELMAVDKKVIDGCLRLVLLRQLGQAVVTDGFDSDLLEATIDKATV.

NAD(+)-binding positions include 69-74 (DGEQHK), 103-107 (GVIGD), 127-128 (TT), K140, K149, and 167-170 (TLDT). E182, H245, and H262 together coordinate Zn(2+).

It belongs to the sugar phosphate cyclases superfamily. Dehydroquinate synthase family. Requires Co(2+) as cofactor. Zn(2+) is required as a cofactor. The cofactor is NAD(+).

It is found in the cytoplasm. It catalyses the reaction 7-phospho-2-dehydro-3-deoxy-D-arabino-heptonate = 3-dehydroquinate + phosphate. Its pathway is metabolic intermediate biosynthesis; chorismate biosynthesis; chorismate from D-erythrose 4-phosphate and phosphoenolpyruvate: step 2/7. Catalyzes the conversion of 3-deoxy-D-arabino-heptulosonate 7-phosphate (DAHP) to dehydroquinate (DHQ). The protein is 3-dehydroquinate synthase of Nitrosococcus oceani (strain ATCC 19707 / BCRC 17464 / JCM 30415 / NCIMB 11848 / C-107).